The chain runs to 151 residues: Protein-export protein SecB (151 aa).

This sequence belongs to the SecB family. As to quaternary structure, homotetramer, a dimer of dimers. One homotetramer interacts with 1 SecA dimer.

It localises to the cytoplasm. In terms of biological role, one of the proteins required for the normal export of preproteins out of the cell cytoplasm. It is a molecular chaperone that binds to a subset of precursor proteins, maintaining them in a translocation-competent state. It also specifically binds to its receptor SecA. The chain is Protein-export protein SecB from Acinetobacter baylyi (strain ATCC 33305 / BD413 / ADP1).